The chain runs to 289 residues: NAD kinase (289 aa).

D82 acts as the Proton acceptor in catalysis. NAD(+) contacts are provided by residues 82-83 (DG), R87, 150-151 (NE), K161, R178, D180, 191-196 (TAYAMS), A215, and Q250.

It belongs to the NAD kinase family. A divalent metal cation is required as a cofactor.

It localises to the cytoplasm. It catalyses the reaction NAD(+) + ATP = ADP + NADP(+) + H(+). Functionally, involved in the regulation of the intracellular balance of NAD and NADP, and is a key enzyme in the biosynthesis of NADP. Catalyzes specifically the phosphorylation on 2'-hydroxyl of the adenosine moiety of NAD to yield NADP. This is NAD kinase from Methanosarcina mazei (strain ATCC BAA-159 / DSM 3647 / Goe1 / Go1 / JCM 11833 / OCM 88) (Methanosarcina frisia).